The primary structure comprises 484 residues: Iroquois-class homeodomain protein IRX-5 (484 aa).

Residues 112 to 174 (DPAYRKNATR…NARRRLKKEN (63 aa)) constitute a DNA-binding region (homeobox; TALE-type). Disordered regions lie at residues 176–393 (MTWT…QCPF) and 424–443 (GHPG…FNGL). Residues 185–202 (EDEEEEENIDLEKNDEDE) are compositionally biased toward acidic residues. Basic and acidic residues-rich tracts occupy residues 203–212 (PQKPEDKGDL) and 249–265 (SDFK…ELPR). Ser273 carries the post-translational modification Phosphoserine. Pro residues predominate over residues 318 to 328 (SPPPPPPPPPA). Low complexity predominate over residues 375–389 (SRASPAPAPARSPSA). At Ser465 the chain carries Phosphoserine.

The protein belongs to the TALE/IRO homeobox family. In terms of tissue distribution, not expressed in the developing metanephric kidney or adult kidney.

It is found in the nucleus. In terms of biological role, establishes the cardiac repolarization gradient by its repressive actions on the KCND2 potassium-channel gene. Required for retinal cone bipolar cell differentiation. May regulate contrast adaptation in the retina and control specific aspects of visual function in circuits of the mammalian retina. Involved in craniofacial and gonadal development. Modulates the migration of progenitor cell populations in branchial arches and gonads by repressing CXCL12. This chain is Iroquois-class homeodomain protein IRX-5 (Irx5), found in Mus musculus (Mouse).